The sequence spans 456 residues: tRNA-2-methylthio-N(6)-dimethylallyladenosine synthase (456 aa).

The region spanning 19–137 (KHFFIETWGC…FPEYLHRVQV (119 aa)) is the MTTase N-terminal domain. Cys-28, Cys-64, Cys-98, Cys-174, Cys-178, and Cys-181 together coordinate [4Fe-4S] cluster. In terms of domain architecture, Radical SAM core spans 160–392 (RKSNVKAFVT…AVNEGIVVGN (233 aa)). Residues 393–456 (KAAEGKIYEV…SFSLVGEVVE (64 aa)) form the TRAM domain.

Belongs to the methylthiotransferase family. MiaB subfamily. Monomer. The cofactor is [4Fe-4S] cluster.

The protein resides in the cytoplasm. The catalysed reaction is N(6)-dimethylallyladenosine(37) in tRNA + (sulfur carrier)-SH + AH2 + 2 S-adenosyl-L-methionine = 2-methylsulfanyl-N(6)-dimethylallyladenosine(37) in tRNA + (sulfur carrier)-H + 5'-deoxyadenosine + L-methionine + A + S-adenosyl-L-homocysteine + 2 H(+). Functionally, catalyzes the methylthiolation of N6-(dimethylallyl)adenosine (i(6)A), leading to the formation of 2-methylthio-N6-(dimethylallyl)adenosine (ms(2)i(6)A) at position 37 in tRNAs that read codons beginning with uridine. This chain is tRNA-2-methylthio-N(6)-dimethylallyladenosine synthase, found in Clostridium botulinum (strain Eklund 17B / Type B).